A 238-amino-acid polypeptide reads, in one-letter code: Large ribosomal subunit protein uL2 (238 aa).

Residues 201 to 238 (FGGGGHQHPGRPKTIARGTSPGRTVGHVAARQTGRSRK) are disordered.

It belongs to the universal ribosomal protein uL2 family. As to quaternary structure, part of the 50S ribosomal subunit. Forms a bridge to the 30S subunit in the 70S ribosome.

In terms of biological role, one of the primary rRNA binding proteins. Required for association of the 30S and 50S subunits to form the 70S ribosome, for tRNA binding and peptide bond formation. It has been suggested to have peptidyltransferase activity; this is somewhat controversial. Makes several contacts with the 16S rRNA in the 70S ribosome. The chain is Large ribosomal subunit protein uL2 from Methanoregula boonei (strain DSM 21154 / JCM 14090 / 6A8).